Here is a 299-residue protein sequence, read N- to C-terminus: Phosphate import ATP-binding protein PstB 1 (299 aa).

Positions 1 to 51 (MTENEMTSNDSTEPTPTTETAASSPDPSGDPLIEQSIDVEGTDSTAAETGK) are disordered. Residues 10 to 27 (DSTEPTPTTETAASSPDP) are compositionally biased toward low complexity. Positions 54–294 (IESSDLNVFY…PESQRVEDYI (241 aa)) constitute an ABC transporter domain. 86 to 93 (GPSGCGKS) provides a ligand contact to ATP.

It belongs to the ABC transporter superfamily. Phosphate importer (TC 3.A.1.7) family. The complex is composed of two ATP-binding proteins (PstB), two transmembrane proteins (PstC and PstA) and a solute-binding protein (PstS).

The protein resides in the cell membrane. The catalysed reaction is phosphate(out) + ATP + H2O = ADP + 2 phosphate(in) + H(+). Part of the ABC transporter complex PstSACB involved in phosphate import. Responsible for energy coupling to the transport system. The sequence is that of Phosphate import ATP-binding protein PstB 1 from Haloarcula marismortui (strain ATCC 43049 / DSM 3752 / JCM 8966 / VKM B-1809) (Halobacterium marismortui).